A 367-amino-acid polypeptide reads, in one-letter code: Peptidyl-prolyl cis-trans isomerase D (367 aa).

In terms of domain architecture, PPIase cyclophilin-type spans 7–171 (FFEVAIGGKT…QPVTIVDCGE (165 aa)). TPR repeat units lie at residues 213–246 (IEKLKSIGTKLFKEGNAEGALKKYLKATTYLEDY), 264–297 (ISCYLNVALMALKVNQPKVAIKAATSALDDETVA), and 302–335 (AKALFRRGSGYAALKNETDALKDLNAALELEPAD).

This sequence belongs to the cyclophilin-type PPIase family. PPIase D subfamily.

Its subcellular location is the cytoplasm. The enzyme catalyses [protein]-peptidylproline (omega=180) = [protein]-peptidylproline (omega=0). Its function is as follows. PPIases accelerate the folding of proteins. It catalyzes the cis-trans isomerization of proline imidic peptide bonds in oligopeptides. The sequence is that of Peptidyl-prolyl cis-trans isomerase D (CPR6) from Yarrowia lipolytica (strain CLIB 122 / E 150) (Yeast).